The chain runs to 266 residues: CAAX prenyl protease 2 (266 aa).

The next 3 helical transmembrane spans lie at 1–21 (MGAGLVSACLPISYVLLVHLF), 42–59 (LLSNFVSIVVTAFYLRDY), and 78–98 (ITYPFILMNAFYLGQFVMMQI). Active-site proton donor/acceptor residues include Glu131 and His164. Transmembrane regions (helical) follow at residues 186–206 (GFQFCYTYLFGAFATWLQLTT), 210–230 (IVPIIAHAFCNAQGLPLWLEI), and 239–259 (RLTLYAAYSVGFAAFVHLLYT).

Belongs to the peptidase U48 family.

Its subcellular location is the endoplasmic reticulum membrane. The protein localises to the membrane. It carries out the reaction Hydrolyzes the peptide bond -P2-(S-farnesyl or geranylgeranyl)C-P1'-P2'-P3'-COOH where P1' and P2' are amino acids with aliphatic sidechains and P3' is any C-terminal residue.. In terms of biological role, protease involved in the processing of a variety of prenylated proteins containing the C-terminal CAAX motif, where C is a cysteine modified with an isoprenoid lipid, A is an aliphatic amino acid and X is any C-terminal amino acid. Proteolytically removes the C-terminal three residues of farnesylated and geranylated proteins, leaving the prenylated cysteine as the new C-terminus. The chain is CAAX prenyl protease 2 from Caenorhabditis elegans.